We begin with the raw amino-acid sequence, 129 residues long: Glycine cleavage system H protein (129 aa).

The Lipoyl-binding domain occupies 24 to 106 (SYTVGITEHA…YGEGWFFRVM (83 aa)). Lys-65 bears the N6-lipoyllysine mark.

The protein belongs to the GcvH family. In terms of assembly, the glycine cleavage system is composed of four proteins: P, T, L and H. (R)-lipoate is required as a cofactor.

In terms of biological role, the glycine cleavage system catalyzes the degradation of glycine. The H protein shuttles the methylamine group of glycine from the P protein to the T protein. The protein is Glycine cleavage system H protein of Shewanella oneidensis (strain ATCC 700550 / JCM 31522 / CIP 106686 / LMG 19005 / NCIMB 14063 / MR-1).